Consider the following 311-residue polypeptide: Biotin synthase (311 aa).

The Radical SAM core domain occupies 32–258 (NGVQFCQLLN…LFPLSRIRLA (227 aa)). [4Fe-4S] cluster contacts are provided by cysteine 47, cysteine 51, and cysteine 54. Residues cysteine 91, cysteine 124, cysteine 184, and arginine 256 each contribute to the [2Fe-2S] cluster site.

Belongs to the radical SAM superfamily. Biotin synthase family. Homodimer. The cofactor is [4Fe-4S] cluster. It depends on [2Fe-2S] cluster as a cofactor.

It catalyses the reaction (4R,5S)-dethiobiotin + (sulfur carrier)-SH + 2 reduced [2Fe-2S]-[ferredoxin] + 2 S-adenosyl-L-methionine = (sulfur carrier)-H + biotin + 2 5'-deoxyadenosine + 2 L-methionine + 2 oxidized [2Fe-2S]-[ferredoxin]. It participates in cofactor biosynthesis; biotin biosynthesis; biotin from 7,8-diaminononanoate: step 2/2. In terms of biological role, catalyzes the conversion of dethiobiotin (DTB) to biotin by the insertion of a sulfur atom into dethiobiotin via a radical-based mechanism. The chain is Biotin synthase from Methylacidiphilum infernorum (isolate V4) (Methylokorus infernorum (strain V4)).